Consider the following 407-residue polypeptide: Nuclear hormone receptor family member nhr-86 (407 aa).

Positions 21–96 (KSTCSICRED…VGMNPAGVQQ (76 aa)) form a DNA-binding region, nuclear receptor. 2 consecutive NR C4-type zinc fingers follow at residues 24 to 44 (CSIC…CRAC) and 60 to 79 (CRGN…CRSC). The region spanning 130–405 (AQSALVEDLH…KDFYDLVNGK (276 aa)) is the NR LBD domain. Positions 394–405 (PPKDFYDLVNGK) are AF-2.

This sequence belongs to the nuclear hormone receptor family. Expressed in intestinal epithelial cells, excretory gland cells and in several head neurons.

It is found in the nucleus. Functionally, nuclear receptor which acts as a transcription activator. Binds small molecule ligands, such as phenazine 1-carboxamide (PCN), a pathogen-derived metabolite, leading to modulation of innate immune responses against virulent pathogens. On exposure to exogenous PCN, P.aeruginosa and other xenobiotic immunostimulant such as R24, activates immune response genes, including irg-4, irg-5, mul-1, drd-50, cyp-35C1 and ugt-30, probably via direct interaction with their promoters, and independent of the p38 MAPK pmk-1 pathway. Exhibits higher affinity to R24 than PCN and thus induces stronger immune response. Binds its own promoter thereby autoregulating its expression in the head hypodermis and the pharynx. Possibly plays a role in lipid storage or catabolism. The chain is Nuclear hormone receptor family member nhr-86 (nhr-86) from Caenorhabditis elegans.